Here is a 462-residue protein sequence, read N- to C-terminus: Cysteine desulfurase, mitochondrial (462 aa).

Pyridoxal 5'-phosphate-binding positions include 132 to 133 (AT), Asn-212, Gln-240, and 260 to 262 (SGH). Lys-263 carries the post-translational modification N6-(pyridoxal phosphate)lysine. Thr-300 contributes to the pyridoxal 5'-phosphate binding site. Cys-386 serves as the catalytic Cysteine persulfide intermediate. Cys-386 contacts [2Fe-2S] cluster.

The protein belongs to the class-V pyridoxal-phosphate-dependent aminotransferase family. NifS/IscS subfamily. Component of the mitochondrial core iron-sulfur cluster (ISC) assembly complex at least composed of the cystein desulfurase Nfs1, the scaffold protein IscU, the accessory protein bcn92/Isd11/Lyrm4, and probably fh/frataxin. Interacts with bcn92/Isd11/Lyrm4 and IscU. It depends on pyridoxal 5'-phosphate as a cofactor. Ubiquitous expression at high levels in any life stage.

The protein resides in the mitochondrion. The protein localises to the nucleus. The enzyme catalyses (sulfur carrier)-H + L-cysteine = (sulfur carrier)-SH + L-alanine. Its activity is regulated as follows. Active when in complex with bcn92/Isd11/Lyrm4. L-cysteine binding kinetics are reduced in the presence of bcn92/Isd11/Lyrm4 and IscU. Activity is regulated by other components of the mitochondrial core iron-sulfur cluster (ISC) complex; Activity is reduced in the presence of IscU but enhanced when both IscU and fh/frataxin are present. Its function is as follows. Catalyzes the removal of elemental sulfur from cysteine to produce alanine. It supplies the inorganic sulfur for iron-sulfur (Fe-S) clusters. This chain is Cysteine desulfurase, mitochondrial, found in Drosophila melanogaster (Fruit fly).